The following is a 293-amino-acid chain: Pantothenate synthetase (293 aa).

30–37 (MGYLHKGH) is an ATP binding site. The active-site Proton donor is His-37. (R)-pantoate is bound at residue Gln-61. Gln-61 is a beta-alanine binding site. An ATP-binding site is contributed by 147–150 (GEKD). Gln-153 lines the (R)-pantoate pocket. ATP is bound by residues Val-176 and 184–187 (CSSR).

This sequence belongs to the pantothenate synthetase family. In terms of assembly, homodimer.

Its subcellular location is the cytoplasm. It catalyses the reaction (R)-pantoate + beta-alanine + ATP = (R)-pantothenate + AMP + diphosphate + H(+). Its pathway is cofactor biosynthesis; (R)-pantothenate biosynthesis; (R)-pantothenate from (R)-pantoate and beta-alanine: step 1/1. Catalyzes the condensation of pantoate with beta-alanine in an ATP-dependent reaction via a pantoyl-adenylate intermediate. The chain is Pantothenate synthetase from Brucella canis (strain ATCC 23365 / NCTC 10854 / RM-666).